Reading from the N-terminus, the 342-residue chain is tRNA N6-adenosine threonylcarbamoyltransferase (342 aa).

His-119 and His-123 together coordinate Fe cation. Substrate is bound by residues 142 to 146, Asp-175, Gly-188, and Asn-282; that span reads VVSGG. Position 310 (Asp-310) interacts with Fe cation.

The protein belongs to the KAE1 / TsaD family. Fe(2+) is required as a cofactor.

Its subcellular location is the cytoplasm. The catalysed reaction is L-threonylcarbamoyladenylate + adenosine(37) in tRNA = N(6)-L-threonylcarbamoyladenosine(37) in tRNA + AMP + H(+). In terms of biological role, required for the formation of a threonylcarbamoyl group on adenosine at position 37 (t(6)A37) in tRNAs that read codons beginning with adenine. Is involved in the transfer of the threonylcarbamoyl moiety of threonylcarbamoyl-AMP (TC-AMP) to the N6 group of A37, together with TsaE and TsaB. TsaD likely plays a direct catalytic role in this reaction. The chain is tRNA N6-adenosine threonylcarbamoyltransferase from Moorella thermoacetica (strain ATCC 39073 / JCM 9320).